The sequence spans 37 residues: Cytochrome bd-I ubiquinol oxidase subunit X (37 aa).

Residues 4-24 form a helical membrane-spanning segment; that stretch reads FAWILGTLLACSFGVITALAL.

The protein belongs to the cytochrome ubiquinol oxidase subunit X family. As to quaternary structure, may be a subunit of cytochrome bd-I ubiquinol oxidase. Probably interacts with CydA and CydB.

Its subcellular location is the cell inner membrane. The catalysed reaction is 2 a ubiquinol + O2(in) + 4 H(+)(in) = 2 a ubiquinone + 2 H2O(in) + 4 H(+)(out). It participates in energy metabolism; oxidative phosphorylation. In terms of biological role, required for correct functioning of cytochrome bd-I oxidase. This protein and AppX may have some functional overlap. This is Cytochrome bd-I ubiquinol oxidase subunit X (cydX) from Escherichia coli (strain K12).